The primary structure comprises 370 residues: Forkhead box protein J1.2 (370 aa).

Residues 45–74 (ANSRPPVPRVSQGPCSPPAGDTASCQAPRT) form a disordered region. The fork-head DNA-binding region spans 108-202 (KPPYSYATLI…VNGVLKRRRM (95 aa)). A disordered region spans residues 227–246 (PGSHHMQHISGGHRQSRRYE).

This sequence belongs to the FOXJ1 family.

The protein resides in the nucleus. In terms of biological role, key transcription factor required for motile ciliogenesis. Activates genes essential for motile cilia formation and function. This Xenopus laevis (African clawed frog) protein is Forkhead box protein J1.2.